We begin with the raw amino-acid sequence, 353 residues long: Quinolinate synthase (353 aa).

The iminosuccinate site is built by histidine 47 and serine 68. Cysteine 113 is a [4Fe-4S] cluster binding site. Residues 139 to 141 (YAN) and serine 156 each bind iminosuccinate. Position 200 (cysteine 200) interacts with [4Fe-4S] cluster. Residues 226–228 (HPE) and threonine 243 each bind iminosuccinate. Cysteine 297 is a binding site for [4Fe-4S] cluster.

This sequence belongs to the quinolinate synthase family. Type 1 subfamily. The cofactor is [4Fe-4S] cluster.

The protein localises to the cytoplasm. It carries out the reaction iminosuccinate + dihydroxyacetone phosphate = quinolinate + phosphate + 2 H2O + H(+). The protein operates within cofactor biosynthesis; NAD(+) biosynthesis; quinolinate from iminoaspartate: step 1/1. Its function is as follows. Catalyzes the condensation of iminoaspartate with dihydroxyacetone phosphate to form quinolinate. The chain is Quinolinate synthase from Yersinia pestis bv. Antiqua (strain Nepal516).